The following is a 261-amino-acid chain: uncharacterized protein (261 aa).

This sequence belongs to the FrhB family.

This is an uncharacterized protein from Methanocaldococcus jannaschii (strain ATCC 43067 / DSM 2661 / JAL-1 / JCM 10045 / NBRC 100440) (Methanococcus jannaschii).